The following is a 436-amino-acid chain: MDSRSPSLPDDRPDPPEQHLDARAGATLRGTAGPRGVRRILPFLGPAVIASIAYMDPGNFATNIEGGARYGYSLLWVILAANLMAMVIQNLSANLGIASGRNLPELIRERWPRPLVWFYWIQAELVAMATDLAEFLGAALAIQLLTGLPMFWGAVVTGVVTFWLLNLQKRGTRPLELAVGAFVLMIGVAYLVQVVLARPDLAAVGAGFVPRLQGPGSAYLAVGIIGATVMPHVIYLHSALTQGRIQTDTTEEKRRLVRLNRVDVIAAMGLAGLINMSMLAVAAATFHGKNVENAGDLTTAYQTLTPLLGPAASVLFAVALLASGLSSSAVGTMAGDVIMQGFMGFHIPLWLRRLITMLPAFIVILLGMDPSSVLILSQVILCFGVPFALVPLLLFTARRDVMGALVTRRSFTVIGWVIAVIIIALNGYLLWELLGG.

The span at 1-22 (MDSRSPSLPDDRPDPPEQHLDA) shows a compositional bias: basic and acidic residues. The disordered stretch occupies residues 1 to 31 (MDSRSPSLPDDRPDPPEQHLDARAGATLRGT). The next 11 helical transmembrane spans lie at 40–60 (ILPF…PGNF), 71–91 (GYSL…IQNL), 115–135 (LVWF…LAEF), 144–164 (LLTG…TFWL), 177–197 (LAVG…VVLA), 216–236 (GSAY…VIYL), 264–284 (VIAA…VAAA), 304–324 (LTPL…LASG), 354–374 (LITM…SSVL), 375–395 (ILSQ…LLLF), and 411–431 (FTVI…YLLW).

The protein belongs to the NRAMP family.

The protein localises to the cell membrane. Functionally, h(+)-stimulated, divalent metal cation uptake system. This Deinococcus radiodurans (strain ATCC 13939 / DSM 20539 / JCM 16871 / CCUG 27074 / LMG 4051 / NBRC 15346 / NCIMB 9279 / VKM B-1422 / R1) protein is Divalent metal cation transporter MntH.